A 226-amino-acid polypeptide reads, in one-letter code: Ribose-5-phosphate isomerase A (226 aa).

Residues 26-29 (TGST), 82-85 (DGAD), and 95-98 (KGGG) contribute to the substrate site. The Proton acceptor role is filled by Glu104. A substrate-binding site is contributed by Lys122.

Belongs to the ribose 5-phosphate isomerase family. In terms of assembly, homodimer.

It carries out the reaction aldehydo-D-ribose 5-phosphate = D-ribulose 5-phosphate. It participates in carbohydrate degradation; pentose phosphate pathway; D-ribose 5-phosphate from D-ribulose 5-phosphate (non-oxidative stage): step 1/1. Functionally, catalyzes the reversible conversion of ribose-5-phosphate to ribulose 5-phosphate. In Streptococcus thermophilus (strain CNRZ 1066), this protein is Ribose-5-phosphate isomerase A.